The sequence spans 293 residues: Nucleotide-binding protein BCG9842_B5683 (293 aa).

14–21 (GMSGAGKT) provides a ligand contact to ATP. 65–68 (DLRG) provides a ligand contact to GTP.

The protein belongs to the RapZ-like family.

In terms of biological role, displays ATPase and GTPase activities. The chain is Nucleotide-binding protein BCG9842_B5683 from Bacillus cereus (strain G9842).